We begin with the raw amino-acid sequence, 125 residues long: Large ribosomal subunit protein bL12 (125 aa).

The protein belongs to the bacterial ribosomal protein bL12 family. In terms of assembly, homodimer. Part of the ribosomal stalk of the 50S ribosomal subunit. Forms a multimeric L10(L12)X complex, where L10 forms an elongated spine to which 2 to 4 L12 dimers bind in a sequential fashion. Binds GTP-bound translation factors.

Forms part of the ribosomal stalk which helps the ribosome interact with GTP-bound translation factors. Is thus essential for accurate translation. The protein is Large ribosomal subunit protein bL12 of Campylobacter jejuni subsp. jejuni serotype O:6 (strain 81116 / NCTC 11828).